We begin with the raw amino-acid sequence, 218 residues long: MTRVKVCGLTTERDHAAAVAAGADAVGIIADVPVETPREVSVETATALRAATPPFVTSVLVTMPATPEHAVDLVRTVAPDAVQLHGDLPVGDAAYVAANTPCPVIKAVTAGDQSAARYADVVDALLVDSPPTDDAGAGGGTGRTHDWAATRAFADRVDTPVVLAGGLTPANVADAVDTVDPFAVDVASGVEARPGEKDHAAVSAFVARATATPDPTLT.

It belongs to the TrpF family.

It catalyses the reaction N-(5-phospho-beta-D-ribosyl)anthranilate = 1-(2-carboxyphenylamino)-1-deoxy-D-ribulose 5-phosphate. It functions in the pathway amino-acid biosynthesis; L-tryptophan biosynthesis; L-tryptophan from chorismate: step 3/5. In Halobacterium salinarum (strain ATCC 29341 / DSM 671 / R1), this protein is N-(5'-phosphoribosyl)anthranilate isomerase.